The primary structure comprises 317 residues: Melanocyte-stimulating hormone receptor (317 aa).

The Extracellular segment spans residues 1-37; sequence MPAQGSQRSLLGSLNSTLMATSSLGLSANQSGPQCLE. N-linked (GlcNAc...) asparagine glycosylation is found at asparagine 15 and asparagine 29. The chain crosses the membrane as a helical span at residues 38 to 63; it reads VSVPDGLFLCLGLVSLVENMLVVAAI. Residues 64 to 72 are Cytoplasmic-facing; that stretch reads AKNRNLHSP. The helical transmembrane segment at 73–93 threads the bilayer; that stretch reads MYCFICCLALSDLLVSVSNVL. The Extracellular portion of the chain corresponds to 94-118; it reads ETAVMLLLEAGALAAQATVVQQLDN. The helical transmembrane segment at 119–140 threads the bilayer; it reads IIDVLVCSSMVSSLCFLGAIAM. The Cytoplasmic segment spans residues 141-163; sequence DRYISIFYALRYHSIVTLSRAQW. A helical membrane pass occupies residues 164-183; sequence ATAAVWAAGILSSTLFIAYY. The Extracellular portion of the chain corresponds to 184-191; it reads DHTAVLLC. Residues 192–211 traverse the membrane as a helical segment; that stretch reads LVVFFLAMLVLMAVLYAHML. The Cytoplasmic segment spans residues 212–240; sequence TQACQHVQGITRLHKRQHLVQQGFGLKGA. Residues 241-266 traverse the membrane as a helical segment; sequence ATLTILLGVFLLCWGPFFLHLTLIAV. Over 267-279 the chain is Extracellular; it reads CPQHPTCSCVFKN. Residues 280-300 traverse the membrane as a helical segment; the sequence is FKLFLALIICNAIVDPLIYAF. At 301 to 317 the chain is on the cytoplasmic side; it reads RXQELRKTLKEVLLFSW.

This sequence belongs to the G-protein coupled receptor 1 family. As to quaternary structure, interacts with MGRN1, but does not undergo MGRN1-mediated ubiquitination; this interaction competes with GNAS-binding and thus inhibits agonist-induced cAMP production. Interacts with OPN3; the interaction results in a decrease in MC1R-mediated cAMP signaling and ultimately a decrease in melanin production in melanocytes.

It is found in the cell membrane. Its function is as follows. Receptor for MSH (alpha, beta and gamma) and ACTH. The activity of this receptor is mediated by G proteins which activate adenylate cyclase. Mediates melanogenesis, the production of eumelanin (black/brown) and phaeomelanin (red/yellow), via regulation of cAMP signaling in melanocytes. The chain is Melanocyte-stimulating hormone receptor (MC1R) from Loris tardigradus (Slender loris).